Here is a 430-residue protein sequence, read N- to C-terminus: Long-chain specific acyl-CoA dehydrogenase, mitochondrial (430 aa).

The N-terminal 30 residues, 1 to 30 (MAARLLRGSLRFLGGHCAARPLPALRCSHS), are a transit peptide targeting the mitochondrion. Position 42 is an N6-acetyllysine (K42). A phosphoserine mark is found at S54 and S55. An N6-acetyllysine; alternate mark is found at K66 and K81. Residues K66 and K81 each carry the N6-succinyllysine; alternate modification. An N6-acetyllysine mark is found at K92 and K95. K165 carries the N6-succinyllysine modification. FAD-binding positions include 170-179 (IAMTELGAGS) and 203-205 (FIS). A substrate-binding site is contributed by S179. 227 to 228 (AR) serves as a coordination point for substrate. K240 bears the N6-succinyllysine mark. Residues K254 and K279 each carry the N6-acetyllysine; alternate modification. K254 and K279 each carry N6-succinyllysine; alternate. Substrate contacts are provided by residues Y282 and 289–292 (PQER). Catalysis depends on E291, which acts as the Proton acceptor. FAD is bound at residue R317. K318 bears the N6-acetyllysine mark. K322 is modified (N6-acetyllysine; alternate). K322 carries the N6-succinyllysine; alternate modification. Residue Q328 coordinates FAD. K358 is modified (N6-acetyllysine). S362 bears the Phosphoserine mark. 385–389 (QLHGG) is an FAD binding site. 412-413 (GG) lines the substrate pocket. 414 to 416 (TNE) lines the FAD pocket.

Belongs to the acyl-CoA dehydrogenase family. In terms of assembly, homotetramer. FAD is required as a cofactor. Post-translationally, acetylation at Lys-318 and Lys-322 in proximity of the cofactor-binding sites strongly reduces catalytic activity. These sites are deacetylated by SIRT3.

It is found in the mitochondrion matrix. It carries out the reaction a long-chain 2,3-saturated fatty acyl-CoA + oxidized [electron-transfer flavoprotein] + H(+) = a long-chain (2E)-enoyl-CoA + reduced [electron-transfer flavoprotein]. The enzyme catalyses hexanoyl-CoA + oxidized [electron-transfer flavoprotein] + H(+) = (2E)-hexenoyl-CoA + reduced [electron-transfer flavoprotein]. The catalysed reaction is octanoyl-CoA + oxidized [electron-transfer flavoprotein] + H(+) = (2E)-octenoyl-CoA + reduced [electron-transfer flavoprotein]. It catalyses the reaction decanoyl-CoA + oxidized [electron-transfer flavoprotein] + H(+) = (2E)-decenoyl-CoA + reduced [electron-transfer flavoprotein]. It carries out the reaction dodecanoyl-CoA + oxidized [electron-transfer flavoprotein] + H(+) = (2E)-dodecenoyl-CoA + reduced [electron-transfer flavoprotein]. The enzyme catalyses tetradecanoyl-CoA + oxidized [electron-transfer flavoprotein] + H(+) = (2E)-tetradecenoyl-CoA + reduced [electron-transfer flavoprotein]. The catalysed reaction is oxidized [electron-transfer flavoprotein] + hexadecanoyl-CoA + H(+) = (2E)-hexadecenoyl-CoA + reduced [electron-transfer flavoprotein]. It catalyses the reaction octadecanoyl-CoA + oxidized [electron-transfer flavoprotein] + H(+) = (2E)-octadecenoyl-CoA + reduced [electron-transfer flavoprotein]. It carries out the reaction eicosanoyl-CoA + oxidized [electron-transfer flavoprotein] + H(+) = (2E)-eicosenoyl-CoA + reduced [electron-transfer flavoprotein]. The enzyme catalyses docosanoyl-CoA + oxidized [electron-transfer flavoprotein] + H(+) = (2E)-docosenoyl-CoA + reduced [electron-transfer flavoprotein]. The catalysed reaction is tetracosanoyl-CoA + oxidized [electron-transfer flavoprotein] + H(+) = (2E)-tetracosenoyl-CoA + reduced [electron-transfer flavoprotein]. It catalyses the reaction (5E)-tetradecenoyl-CoA + oxidized [electron-transfer flavoprotein] + H(+) = (2E,5E)-tetradecadienoyl-CoA + reduced [electron-transfer flavoprotein]. It carries out the reaction (5Z)-tetradecenoyl-CoA + oxidized [electron-transfer flavoprotein] + H(+) = (2E,5Z)-tetradecadienoyl-CoA + reduced [electron-transfer flavoprotein]. The enzyme catalyses oxidized [electron-transfer flavoprotein] + (9Z)-octadecenoyl-CoA + H(+) = (2E,9Z)-octadecadienoyl-CoA + reduced [electron-transfer flavoprotein]. Its pathway is lipid metabolism; mitochondrial fatty acid beta-oxidation. Functionally, long-chain specific acyl-CoA dehydrogenase is one of the acyl-CoA dehydrogenases that catalyze the first step of mitochondrial fatty acid beta-oxidation, an aerobic process breaking down fatty acids into acetyl-CoA and allowing the production of energy from fats. The first step of fatty acid beta-oxidation consists in the removal of one hydrogen from C-2 and C-3 of the straight-chain fatty acyl-CoA thioester, resulting in the formation of trans-2-enoyl-CoA. Among the different mitochondrial acyl-CoA dehydrogenases, long-chain specific acyl-CoA dehydrogenase can act on saturated and unsaturated acyl-CoAs with 6 to 24 carbons with a preference for 8 to 18 carbons long primary chains. In Macaca fascicularis (Crab-eating macaque), this protein is Long-chain specific acyl-CoA dehydrogenase, mitochondrial.